A 373-amino-acid chain; its full sequence is Putative F-box/kelch-repeat protein At2g41360 (373 aa).

The F-box domain occupies 8–54 (WSSLSCLPDEMVLNCLARVPRRYYENISCVSVRLRSLVRTPELYRMR). Kelch repeat units lie at residues 116 to 162 (EIYF…VFDG) and 163 to 208 (KIHV…MVSS).

This is Putative F-box/kelch-repeat protein At2g41360 from Arabidopsis thaliana (Mouse-ear cress).